A 31-amino-acid polypeptide reads, in one-letter code: Cytochrome b6-f complex subunit 6 (31 aa).

A helical membrane pass occupies residues 3–23 (LIIGYIILLACAFGLAAGLYF).

The protein belongs to the PetL family. The 4 large subunits of the cytochrome b6-f complex are cytochrome b6, subunit IV (17 kDa polypeptide, PetD), cytochrome f and the Rieske protein, while the 4 small subunits are PetG, PetL, PetM and PetN. The complex functions as a dimer.

It is found in the plastid. The protein localises to the chloroplast thylakoid membrane. Its function is as follows. Component of the cytochrome b6-f complex, which mediates electron transfer between photosystem II (PSII) and photosystem I (PSI), cyclic electron flow around PSI, and state transitions. PetL is important for photoautotrophic growth as well as for electron transfer efficiency and stability of the cytochrome b6-f complex. The chain is Cytochrome b6-f complex subunit 6 from Guillardia theta (Cryptophyte).